A 471-amino-acid polypeptide reads, in one-letter code: tRNA(Ile)-lysidine synthase (471 aa).

27-32 (SGGPDS) contacts ATP.

It belongs to the tRNA(Ile)-lysidine synthase family.

The protein resides in the cytoplasm. The enzyme catalyses cytidine(34) in tRNA(Ile2) + L-lysine + ATP = lysidine(34) in tRNA(Ile2) + AMP + diphosphate + H(+). Ligates lysine onto the cytidine present at position 34 of the AUA codon-specific tRNA(Ile) that contains the anticodon CAU, in an ATP-dependent manner. Cytidine is converted to lysidine, thus changing the amino acid specificity of the tRNA from methionine to isoleucine. The sequence is that of tRNA(Ile)-lysidine synthase from Dehalococcoides mccartyi (strain CBDB1).